A 223-amino-acid chain; its full sequence is Ribosomal RNA small subunit methyltransferase Nep1 (223 aa).

S-adenosyl-L-methionine contacts are provided by residues G181, G186, and 199-204 (LYREPL).

It belongs to the class IV-like SAM-binding methyltransferase superfamily. RNA methyltransferase NEP1 family. Homodimer.

The enzyme catalyses a pseudouridine in rRNA + S-adenosyl-L-methionine = an N(1)-methylpseudouridine in rRNA + S-adenosyl-L-homocysteine + H(+). In terms of biological role, methyltransferase involved in ribosomal biogenesis. Specifically catalyzes the N1-methylation of the pseudouridine corresponding to position 914 in M.jannaschii 16S rRNA. The protein is Ribosomal RNA small subunit methyltransferase Nep1 of Pyrococcus furiosus (strain ATCC 43587 / DSM 3638 / JCM 8422 / Vc1).